The following is a 1168-amino-acid chain: DNA-directed RNA polymerase subunit beta (1168 aa).

The protein belongs to the RNA polymerase beta chain family. As to quaternary structure, the RNAP catalytic core consists of 2 alpha, 1 beta, 1 beta' and 1 omega subunit. When a sigma factor is associated with the core the holoenzyme is formed, which can initiate transcription.

It catalyses the reaction RNA(n) + a ribonucleoside 5'-triphosphate = RNA(n+1) + diphosphate. In terms of biological role, DNA-dependent RNA polymerase catalyzes the transcription of DNA into RNA using the four ribonucleoside triphosphates as substrates. The protein is DNA-directed RNA polymerase subunit beta of Rhodococcus jostii (strain RHA1).